Reading from the N-terminus, the 426-residue chain is Glutamate-1-semialdehyde 2,1-aminomutase (426 aa).

The residue at position 265 (Lys265) is an N6-(pyridoxal phosphate)lysine.

It belongs to the class-III pyridoxal-phosphate-dependent aminotransferase family. HemL subfamily. As to quaternary structure, homodimer. It depends on pyridoxal 5'-phosphate as a cofactor.

It is found in the cytoplasm. It catalyses the reaction (S)-4-amino-5-oxopentanoate = 5-aminolevulinate. It functions in the pathway porphyrin-containing compound metabolism; protoporphyrin-IX biosynthesis; 5-aminolevulinate from L-glutamyl-tRNA(Glu): step 2/2. This Cronobacter sakazakii (strain ATCC BAA-894) (Enterobacter sakazakii) protein is Glutamate-1-semialdehyde 2,1-aminomutase.